The primary structure comprises 189 residues: Hypoxanthine/guanine phosphoribosyltransferase (189 aa).

It belongs to the purine/pyrimidine phosphoribosyltransferase family. Archaeal HPRT subfamily. As to quaternary structure, homodimer.

The protein resides in the cytoplasm. It carries out the reaction IMP + diphosphate = hypoxanthine + 5-phospho-alpha-D-ribose 1-diphosphate. The catalysed reaction is GMP + diphosphate = guanine + 5-phospho-alpha-D-ribose 1-diphosphate. Its pathway is purine metabolism; IMP biosynthesis via salvage pathway; IMP from hypoxanthine: step 1/1. Its function is as follows. Catalyzes a salvage reaction resulting in the formation of IMP that is energically less costly than de novo synthesis. The polypeptide is Hypoxanthine/guanine phosphoribosyltransferase (hpt) (Methanosarcina acetivorans (strain ATCC 35395 / DSM 2834 / JCM 12185 / C2A)).